The following is a 136-amino-acid chain: Histone H3.3 type c (136 aa).

A disordered region spans residues 1-30; it reads MARTKQTARKSTGAKVPRKHLSSKSSFPSK. The residue at position 5 (Lys5) is an N6,N6,N6-trimethyllysine; by set1; alternate. Lys5 is modified (N6,N6-dimethyllysine; by set1; alternate). Residues Lys5 and Lys10 each carry the N6-acetyllysine; alternate modification. N6-methyllysine; by set1; alternate is present on Lys5. Residue Lys10 is modified to N6,N6,N6-trimethyllysine; alternate. Position 10 is an N6,N6-dimethyllysine; alternate (Lys10). Lys10 carries the post-translational modification N6-methyllysine; alternate. Residue Ser11 is modified to Phosphoserine. At Lys15 the chain carries N6-acetyllysine. Residues Lys19, Lys24, and Lys37 each carry the N6-acetyllysine; alternate modification. N6-methyllysine; alternate is present on residues Lys19, Lys24, and Lys37. Lys37 carries the post-translational modification N6,N6,N6-trimethyllysine; alternate. Lys37 carries the N6,N6-dimethyllysine; alternate modification. Lys57 is modified (N6-acetyllysine). Lys80 bears the N6,N6,N6-trimethyllysine; alternate mark. At Lys80 the chain carries N6,N6-dimethyllysine; alternate. The residue at position 80 (Lys80) is an N6-methyllysine; alternate.

The protein belongs to the histone H3 family. As to quaternary structure, the nucleosome is a histone octamer containing two molecules each of H2A, H2B, H3 and H4 assembled in one H3-H4 heterotetramer and two H2A-H2B heterodimers. The octamer wraps approximately 147 bp of DNA. Acetylation is generally linked to gene activation. In terms of processing, different methylation states of H3K4 mark distinct developmental phases. H3K4me2 is associated with euchromatic regions. H3K4me3 is a mark of active chromatin. set1 is responsible for all mono-, di- and tri-methylation of H3K4. H3K4me facilitates subsequent acetylation of H3 and H4. Methylation at H3K9 is linked to gene repression. Post-translationally, H3S10ph, which is linked to gene activation, prevents methylation at H3K9 but facilitates acetylation of H3 and H4.

The protein resides in the nucleus. It localises to the chromosome. Its function is as follows. Core component of nucleosome. Nucleosomes wrap and compact DNA into chromatin, limiting DNA accessibility to the cellular machineries which require DNA as a template. Histones thereby play a central role in transcription regulation, DNA repair, DNA replication and chromosomal stability. DNA accessibility is regulated via a complex set of post-translational modifications of histones, also called histone code, and nucleosome remodeling. In Dictyostelium discoideum (Social amoeba), this protein is Histone H3.3 type c (H3c).